A 25-amino-acid chain; its full sequence is Flagellar filament core protein flaB1 (25 aa).

It belongs to the bacterial flagellin family. The flagellum consists of an outer layer composed of two sheath proteins, flaA1 (44 kDa) and flaA2 (35 kDa) around a core that contains three proteins flaB1 (37 kDa), flaB2 (34 kDa) and flaB3 (32 kDa).

The protein localises to the periplasmic flagellum. Its subcellular location is the periplasm. Component of the core of the flagella. This Brachyspira hyodysenteriae (Treponema hyodysenteriae) protein is Flagellar filament core protein flaB1 (flaB1).